Here is a 608-residue protein sequence, read N- to C-terminus: Elongation factor 4 (608 aa).

One can recognise a tr-type G domain in the interval 11–193; sequence DHIRNFSIVA…AIVNRLPPPK (183 aa). Residues 23-28 and 140-143 each bind GTP; these read DHGKST and NKID.

It belongs to the TRAFAC class translation factor GTPase superfamily. Classic translation factor GTPase family. LepA subfamily.

It is found in the cell inner membrane. It catalyses the reaction GTP + H2O = GDP + phosphate + H(+). Its function is as follows. Required for accurate and efficient protein synthesis under certain stress conditions. May act as a fidelity factor of the translation reaction, by catalyzing a one-codon backward translocation of tRNAs on improperly translocated ribosomes. Back-translocation proceeds from a post-translocation (POST) complex to a pre-translocation (PRE) complex, thus giving elongation factor G a second chance to translocate the tRNAs correctly. Binds to ribosomes in a GTP-dependent manner. The chain is Elongation factor 4 from Agrobacterium fabrum (strain C58 / ATCC 33970) (Agrobacterium tumefaciens (strain C58)).